A 107-amino-acid chain; its full sequence is Large ribosomal subunit protein bL21 (107 aa).

The protein belongs to the bacterial ribosomal protein bL21 family. In terms of assembly, part of the 50S ribosomal subunit. Contacts protein L20.

This protein binds to 23S rRNA in the presence of protein L20. The polypeptide is Large ribosomal subunit protein bL21 (Pseudothermotoga lettingae (strain ATCC BAA-301 / DSM 14385 / NBRC 107922 / TMO) (Thermotoga lettingae)).